The sequence spans 322 residues: tRNA uridine(34) hydroxylase (322 aa).

A Rhodanese domain is found at 126–220 (LAEDTVVIDA…YGKDPEVKGE (95 aa)). The active-site Cysteine persulfide intermediate is the C180.

It belongs to the TrhO family.

It carries out the reaction uridine(34) in tRNA + AH2 + O2 = 5-hydroxyuridine(34) in tRNA + A + H2O. Functionally, catalyzes oxygen-dependent 5-hydroxyuridine (ho5U) modification at position 34 in tRNAs. This is tRNA uridine(34) hydroxylase from Shouchella clausii (strain KSM-K16) (Alkalihalobacillus clausii).